The chain runs to 240 residues: Protein FAM246C (240 aa).

2 disordered regions span residues 1–117 (MAEP…WRSA) and 161–240 (LPAA…TRAA). 2 stretches are compositionally biased toward basic and acidic residues: residues 19-31 (EVLRRGTGRRRDP) and 60-74 (AASRSEVPRLLKLVE). The span at 165–175 (SPAPSPAPRPA) shows a compositional bias: pro residues. The segment covering 176–187 (ARPCRGRSAPLA) has biased composition (low complexity).

The protein belongs to the FAM246 family.

This chain is Protein FAM246C, found in Homo sapiens (Human).